The primary structure comprises 246 residues: 3'(2'),5'-bisphosphate nucleotidase CysQ (246 aa).

Positions 64, 83, 85, 86, and 205 each coordinate Mg(2+). Position 64 (E64) interacts with substrate. Residues L85 to T88 and D205 contribute to the substrate site.

This sequence belongs to the inositol monophosphatase superfamily. CysQ family. Mg(2+) serves as cofactor.

Its subcellular location is the cell inner membrane. The enzyme catalyses adenosine 3',5'-bisphosphate + H2O = AMP + phosphate. Functionally, converts adenosine-3',5'-bisphosphate (PAP) to AMP. The protein is 3'(2'),5'-bisphosphate nucleotidase CysQ of Escherichia coli O157:H7.